A 326-amino-acid chain; its full sequence is Delta-aminolevulinic acid dehydratase (326 aa).

Zn(2+)-binding residues include Cys-125, Cys-127, and Cys-135. Catalysis depends on Lys-200, which acts as the Schiff-base intermediate with substrate. 5-aminolevulinate-binding residues include Arg-210 and Arg-222. Mg(2+) is bound at residue Glu-238. Residue Lys-253 is the Schiff-base intermediate with substrate of the active site. Ser-279 is a 5-aminolevulinate binding site.

The protein belongs to the ALAD family. As to quaternary structure, homooctamer. Zn(2+) is required as a cofactor.

The enzyme catalyses 2 5-aminolevulinate = porphobilinogen + 2 H2O + H(+). The protein operates within porphyrin-containing compound metabolism; protoporphyrin-IX biosynthesis; coproporphyrinogen-III from 5-aminolevulinate: step 1/4. In terms of biological role, catalyzes an early step in the biosynthesis of tetrapyrroles. Binds two molecules of 5-aminolevulinate per subunit, each at a distinct site, and catalyzes their condensation to form porphobilinogen. This chain is Delta-aminolevulinic acid dehydratase (hemB), found in Methanothermobacter thermautotrophicus (strain ATCC 29096 / DSM 1053 / JCM 10044 / NBRC 100330 / Delta H) (Methanobacterium thermoautotrophicum).